We begin with the raw amino-acid sequence, 144 residues long: Large ribosomal subunit protein uL11 (144 aa).

Belongs to the universal ribosomal protein uL11 family. In terms of assembly, part of the ribosomal stalk of the 50S ribosomal subunit. Interacts with L10 and the large rRNA to form the base of the stalk. L10 forms an elongated spine to which L12 dimers bind in a sequential fashion forming a multimeric L10(L12)X complex. Post-translationally, one or more lysine residues are methylated.

Forms part of the ribosomal stalk which helps the ribosome interact with GTP-bound translation factors. This Acidiphilium cryptum (strain JF-5) protein is Large ribosomal subunit protein uL11.